The sequence spans 190 residues: Elongation factor P-like protein (190 aa).

Belongs to the elongation factor P family.

In Shigella dysenteriae serotype 1 (strain Sd197), this protein is Elongation factor P-like protein.